The primary structure comprises 614 residues: Zinc metalloproteinase-disintegrin-like HR1b (614 aa).

Residues 1 to 20 (MIQVLLVTICLAVFPYQGSS) form the signal peptide. Positions 21 to 191 (IILESGNVND…KASKLVVTAE (171 aa)) are excised as a propeptide. Position 192 is a pyrrolidone carboxylic acid (Gln-192). Residues 198–394 (RYIKLAIVVD…HKPQCILNAP (197 aa)) enclose the Peptidase M12B domain. Residue Asn-264 is glycosylated (N-linked (GlcNAc...) asparagine). Cystine bridges form between Cys-309/Cys-389, Cys-349/Cys-373, and Cys-351/Cys-356. His-334 lines the Zn(2+) pocket. Glu-335 is a catalytic residue. Zn(2+)-binding residues include His-338 and His-344. The N-linked (GlcNAc...) asparagine glycan is linked to Asn-372. A propeptide spanning residues 395 to 398 (SKTD) is cleaved from the precursor. A Disintegrin domain is found at 402–488 (PPVCGNELLE…DCPTDRFHRN (87 aa)). Residues Val-404, Asn-407, Leu-409, Glu-411, Glu-414, and Asp-417 each coordinate Ca(2+). 22 cysteine pairs are disulfide-bonded: Cys-405/Cys-424, Cys-405/Cys-434, Cys-416/Cys-429, Cys-416/Cys-434, Cys-418/Cys-424, Cys-428/Cys-451, Cys-442/Cys-448, Cys-447/Cys-473, Cys-460/Cys-480, Cys-467/Cys-492, Cys-467/Cys-499, Cys-492/Cys-504, Cys-499/Cys-504, Cys-511/Cys-526, Cys-511/Cys-561, Cys-526/Cys-568, Cys-539/Cys-549, Cys-549/Cys-556, Cys-556/Cys-593, Cys-561/Cys-568, Cys-587/Cys-598, and Cys-593/Cys-598. The short motif at 466–468 (ECD) is the D/ECD-tripeptide element. Residue Asn-518 is glycosylated (N-linked (GlcNAc...) asparagine). Residue Asn-571 is glycosylated (N-linked (GlcNAc...) asparagine). The propeptide occupies 608-614 (TTVFSLI).

It belongs to the venom metalloproteinase (M12B) family. P-III subfamily. P-IIIb sub-subfamily. As to quaternary structure, monomer. Zn(2+) is required as a cofactor. As to expression, expressed by the venom gland.

The protein localises to the secreted. In terms of biological role, zinc protease that induces hemorrhage. Has preference for Tyr, Leu, Arg, Met, and Phe at the P1 position, in descending order (in vitro). Shows equal preference for the sequences of Ala-Asp and Arg-Ile at the P3-P2 position with different enzyme cleavage sites across the P1 position: the N-terminus side for Ala-Asp and the C-terminus side for Arg-Ile. Inhibits platelet aggregation induced by ADP, thrombin, platelet-activating factor and collagen. Acts by inhibiting fibrinogen interaction with platelet receptors alpha-IIb/beta-3 (ITGA2B/ITGB3). This chain is Zinc metalloproteinase-disintegrin-like HR1b, found in Protobothrops flavoviridis (Habu).